Here is a 1412-residue protein sequence, read N- to C-terminus: MNTKVSRQYAKISENSIQKISLALATPEDVLEWSRGEVHRPETINYKTFKPERGGLFDELIFGPLVDYKCSVCGRKYRKSNENQLCIATKECKIRGSRILSKMARRYSMGHIALNAPILHFWFFKIDHSIIAKLLGLKVFEGNSKVPTTITKTAIENLIYYKSHIVLETGGLKSLEQNKIIDISEAGLIYKNALIEIIEFYPPGSEEHNALAESISELADVTSSKIGREYGVDYYELNEIIEEFSSARIATGALAIEYLLDKIDLRAEKAAVEAELAGVQKQIYKNKKIILKNQKRDKLYKRLQVINAFINSGQDPKMMIIRNLPVIPADLRPLVQLDGSRHSTSDCNELYRRIIIRNNRLKRWKAAHAPVIIIQNEMRMLQEAVDALIDNQKKSTNQVTTKEGRPLKSISDALTGKKGRFRQNLLGKRVDYSGRSVIVVGPKLKMHQAGLPRKMAAVLFEPWIIRNLIQEKKVGSIKMARKMIEEENPIIWPHVAKVIQNKPIILNRAPTLHRLSIQAFEPVLVRAKAIQLHPLVTAGFNADFDGDQMAVHIPISPEAIRETQELMFADKNILGPKDGEPIVNPSQDMVLGLYYLSQEKAGAKGEGSFFSTYEAMLKAYEFRSVELHARVVLPFEQVKPFIAKTMRGHLISTVGKFILNNIFPANFPFIFDDNVDELELNYPSQIKKYVLPYGTNFREYIQNLKVNEPLNKKAIAKIVRQIFDTYDGLLAKEDIATVIDQLDFGNYQNRVLLYEKLRDYKKQKLPVPHLSKLSEFTIFEYSQLYKQLQQNGPVESYRVLEDHEKAELLEKIWFKYNNMVCSILDKIKDLGFHYSTLSGTSIAISDIKMAPKKHEFIKDGENYINKLNTFYAKGLITDDERYVLAIAKWTQIKNDIQEDLNQSIKDDNQNSLVMMMKSGARGNISNFVQLAGMRGLMANNVKALKVDAENERVVRSIVEVPVKSSFLEGLTSFEFYSSTHGARKGLTDTALNTAKSGYLTRRLVDVAQNIVVVAEDCFSDFGFVVKDIIDTKTNTIIVPLLERIEGRFLNKDVYDSRGIKLASAGSMVDLQTAKKIVAAGIKKVEIRSILSCHIKNSVCKKCYGKDLATNRLVSIGEAVGIIAAQSIGEPGTQLTMRTFHTGGVANVEDITGGFTRLIELIDSHEHPWGKPAKISPYYGIITKISDLAEKNAANKGFLITIEYKTSKNEKAEHIIRIEQSQKLRVKVGDKVIPGQKLVEGPIILKELLAVSDARTLQNYLLKEIQRIYRMQGISISDKYIEIIIRQMLSKVQIIENGDSNFFIGSIVDISDYQEVNGQLISQNKNPAFGNVIVKGAKQIPLLSNSFLAAASYQETSKILVHSVISSQIDKLEGLKENIIVGHKIPAGTNSNYEPKSKFDIRNPLSFFMKNNR.

Residues aspartate 543, aspartate 545, and aspartate 547 each coordinate Mg(2+). Zn(2+)-binding residues include cysteine 1017, cysteine 1092, cysteine 1099, and cysteine 1102.

It belongs to the RNA polymerase beta' chain family. In terms of assembly, the RNAP catalytic core consists of 2 alpha, 1 beta, 1 beta' and 1 omega subunit. When a sigma factor is associated with the core the holoenzyme is formed, which can initiate transcription. Mg(2+) is required as a cofactor. Requires Zn(2+) as cofactor.

It catalyses the reaction RNA(n) + a ribonucleoside 5'-triphosphate = RNA(n+1) + diphosphate. Its function is as follows. DNA-dependent RNA polymerase catalyzes the transcription of DNA into RNA using the four ribonucleoside triphosphates as substrates. The chain is DNA-directed RNA polymerase subunit beta' from Mesomycoplasma hyopneumoniae (strain 232) (Mycoplasma hyopneumoniae).